The chain runs to 401 residues: uncharacterized protein (401 aa).

The protein belongs to the herpesviridae BTRF1 family.

This is an uncharacterized protein from Connochaetes taurinus (Blue wildebeest).